We begin with the raw amino-acid sequence, 52 residues long: Large ribosomal subunit protein bL33A (52 aa).

Belongs to the bacterial ribosomal protein bL33 family.

The chain is Large ribosomal subunit protein bL33A from Staphylococcus aureus (strain USA300).